A 142-amino-acid chain; its full sequence is Putative pre-16S rRNA nuclease (142 aa).

It belongs to the YqgF nuclease family.

The protein resides in the cytoplasm. Functionally, could be a nuclease involved in processing of the 5'-end of pre-16S rRNA. The protein is Putative pre-16S rRNA nuclease of Chloroflexus aggregans (strain MD-66 / DSM 9485).